The primary structure comprises 156 residues: Small ribosomal subunit protein uS7 (156 aa).

The protein belongs to the universal ribosomal protein uS7 family. As to quaternary structure, part of the 30S ribosomal subunit. Contacts proteins S9 and S11.

One of the primary rRNA binding proteins, it binds directly to 16S rRNA where it nucleates assembly of the head domain of the 30S subunit. Is located at the subunit interface close to the decoding center, probably blocks exit of the E-site tRNA. The sequence is that of Small ribosomal subunit protein uS7 from Thermosynechococcus vestitus (strain NIES-2133 / IAM M-273 / BP-1).